Consider the following 839-residue polypeptide: V-type proton ATPase 116 kDa subunit a 1 (839 aa).

Residues 1 to 395 (MGELFRSEEM…DAYGIGTYRE (395 aa)) are Cytoplasmic-facing. 2 positions are modified to phosphothreonine: T257 and T367. Y371 carries the phosphotyrosine modification. The helical transmembrane segment at 396–414 (INPAPYTVITFPFLFAVMF) threads the bilayer. At 415–416 (GD) the chain is on the vacuolar side. The chain crosses the membrane as a helical span at residues 417 to 433 (FGHGILMTLFAVWMVLR). At 434-448 (ESRILSQKHENEMFS) the chain is on the cytoplasmic side. The helical transmembrane segment at 449–478 (MVFSGRYIILLMGLFSIYTGLIYNDCFSKS) threads the bilayer. The Vacuolar segment spans residues 479 to 542 (LNIFGSSWSV…ATNKLTFLNS (64 aa)). Residues 543–562 (FKMKMSVILGIIHMLFGVSL) form a helical membrane-spanning segment. Residues 563–580 (SLFNHIYFKKPLNIYFGF) lie on the Cytoplasmic side of the membrane. The helical transmembrane segment at 581–601 (IPEIIFMSSLFGYLVILIFYK) threads the bilayer. The Vacuolar segment spans residues 602–646 (WTAYDAHSSRNAPSLLIHFINMFLFSYPESGNAMLYSGQKGIQCF). The helical transmembrane segment at 647-666 (LIVVAMLCVPWMLLFKPLIL) threads the bilayer. At 667–726 (RHQYLRKKHLGTLNFGGIRVGNGPTEEDAEIIQHDQLSTHSEDAEEFDFGDTMVHQAIHT) the chain is on the cytoplasmic side. The helical transmembrane segment at 727–751 (IEYCLGCISNTASYLRLWALSLAHA) threads the bilayer. The Vacuolar portion of the chain corresponds to 752 to 772 (QLSEVLWTMVIHIGLHVRSLA). Residues 773–811 (GGLGLFFIFAAFATLTVAILLIMEGLSAFLHALRLHWVE) traverse the membrane as a helical segment. The Cytoplasmic portion of the chain corresponds to 812–839 (FQNKFYTGTGFKFLPFSFEHIREGKFDE).

It belongs to the V-ATPase 116 kDa subunit family. In terms of assembly, V-ATPase is a heteromultimeric enzyme made up of two complexes: the ATP-hydrolytic V1 complex and the proton translocation V0 complex. The V1 complex consists of three catalytic AB heterodimers that form a heterohexamer, three peripheral stalks each consisting of EG heterodimers, one central rotor including subunits D and F, and the regulatory subunits C and H. The proton translocation complex V0 consists of the proton transport subunit a, a ring of proteolipid subunits c9c'', rotary subunit d, subunits e and f, and the accessory subunits ATP6AP1/Ac45 and ATP6AP2/PRR. Interacts with SPAAR. As to expression, predominantly expressed in neurons in the cortex and in the dentate gyrus, CA1 and CA3 regions of the hippocampus (at protein level). Expressed at lower levels in astrocytes, oligodendrocytes and microglia (at protein level). In the cerebellum, present in Purkinje and granule cells (at protein level).

It localises to the cytoplasmic vesicle. It is found in the clathrin-coated vesicle membrane. Its subcellular location is the secretory vesicle. The protein localises to the synaptic vesicle membrane. The protein resides in the melanosome. Functionally, subunit of the V0 complex of vacuolar(H+)-ATPase (V-ATPase), a multisubunit enzyme composed of a peripheral complex (V1) that hydrolyzes ATP and a membrane integral complex (V0) that translocates protons. V-ATPase is responsible for the acidification of various organelles, such as lysosomes, endosomes, the trans-Golgi network, and secretory granules, including synaptic vesicles. In certain cell types, can be exported to the plasma membrane, where it is involved in the acidification of the extracellular environment. Required for assembly and activity of the vacuolar ATPase. Through its action on compartment acidification, plays an essential role in neuronal development in terms of integrity and connectivity of neurons. This Mus musculus (Mouse) protein is V-type proton ATPase 116 kDa subunit a 1 (Atp6v0a1).